Reading from the N-terminus, the 405-residue chain is Argininosuccinate synthase (405 aa).

11–19 (AYSGGLDTS) contacts ATP. Tyr90 serves as a coordination point for L-citrulline. Gly119 contributes to the ATP binding site. L-aspartate is bound by residues Thr121, Asn125, and Asp126. Asn125 is an L-citrulline binding site. The L-citrulline site is built by Arg129, Ser178, Ser187, Glu263, and Tyr275.

This sequence belongs to the argininosuccinate synthase family. Type 1 subfamily. Homotetramer.

It localises to the cytoplasm. It catalyses the reaction L-citrulline + L-aspartate + ATP = 2-(N(omega)-L-arginino)succinate + AMP + diphosphate + H(+). It participates in amino-acid biosynthesis; L-arginine biosynthesis; L-arginine from L-ornithine and carbamoyl phosphate: step 2/3. This is Argininosuccinate synthase from Legionella pneumophila subsp. pneumophila (strain Philadelphia 1 / ATCC 33152 / DSM 7513).